An 80-amino-acid chain; its full sequence is Consomatin Mrc1 (80 aa).

An N-terminal signal peptide occupies residues 1–22; that stretch reads MQTAYWVMVMMMVWITAPLSEG. The propeptide occupies 23–57; sequence GKLNDVIRGLVPDDVTPQLILRSLISRRPSDSVVR. A disulfide bridge links C63 with C68. W65 is modified (D-tryptophan). 4-hydroxyproline is present on residues P69, P70, P71, and P72. A propeptide spanning residues 74–80 is cleaved from the precursor; sequence RRPNGKG.

This sequence belongs to the conotoxin C superfamily. Consomatin family. As to expression, expressed by the venom duct.

Its subcellular location is the secreted. In terms of biological role, moderately activates human somatostatin receptors (SSTR) with a preferential activation of SSTR1 and SSTR4. In vivo, does not cause behavioral changes in mice within a few minutes of intracranial injection, but causes a progressive loss of movement thereafter. Four to five hours after injection, mice recover, even with the highest dose tested. Shows antinociception and antihyperalgesia activities in two mouse models of acute pain, most probably by acting outside the central nervous system. The sequence is that of Consomatin Mrc1 from Conus mercator (Trader cone).